Reading from the N-terminus, the 117-residue chain is Large ribosomal subunit protein eL34 (117 aa).

The residue at position 12 (S12) is a Phosphoserine. K36 and K43 each carry N6-acetyllysine. K108 participates in a covalent cross-link: Glycyl lysine isopeptide (Lys-Gly) (interchain with G-Cter in SUMO2).

It belongs to the eukaryotic ribosomal protein eL34 family. Component of the large ribosomal subunit.

The protein resides in the cytoplasm. Its subcellular location is the cytosol. It is found in the endoplasmic reticulum. Its function is as follows. Component of the large ribosomal subunit. The ribosome is a large ribonucleoprotein complex responsible for the synthesis of proteins in the cell. The polypeptide is Large ribosomal subunit protein eL34 (Rpl34) (Mus musculus (Mouse)).